The following is a 329-amino-acid chain: Phenylalanine--tRNA ligase alpha subunit (329 aa).

Residue E254 coordinates Mg(2+).

This sequence belongs to the class-II aminoacyl-tRNA synthetase family. Phe-tRNA synthetase alpha subunit type 1 subfamily. In terms of assembly, tetramer of two alpha and two beta subunits. Requires Mg(2+) as cofactor.

Its subcellular location is the cytoplasm. It catalyses the reaction tRNA(Phe) + L-phenylalanine + ATP = L-phenylalanyl-tRNA(Phe) + AMP + diphosphate + H(+). This Mannheimia succiniciproducens (strain KCTC 0769BP / MBEL55E) protein is Phenylalanine--tRNA ligase alpha subunit.